The chain runs to 225 residues: Small ribosomal subunit protein uS7 (225 aa).

The protein belongs to the universal ribosomal protein uS7 family. As to quaternary structure, component of the small ribosomal subunit. Mature ribosomes consist of a small (40S) and a large (60S) subunit. The 40S subunit contains about 32 different proteins and 1 molecule of RNA (18S). The 60S subunit contains 45 different proteins and 3 molecules of RNA (25S, 5.8S and 5S).

The protein localises to the cytoplasm. In terms of biological role, component of the ribosome, a large ribonucleoprotein complex responsible for the synthesis of proteins in the cell. The small ribosomal subunit (SSU) binds messenger RNAs (mRNAs) and translates the encoded message by selecting cognate aminoacyl-transfer RNA (tRNA) molecules. The large subunit (LSU) contains the ribosomal catalytic site termed the peptidyl transferase center (PTC), which catalyzes the formation of peptide bonds, thereby polymerizing the amino acids delivered by tRNAs into a polypeptide chain. The nascent polypeptides leave the ribosome through a tunnel in the LSU and interact with protein factors that function in enzymatic processing, targeting, and the membrane insertion of nascent chains at the exit of the ribosomal tunnel. This Candida albicans (strain SC5314 / ATCC MYA-2876) (Yeast) protein is Small ribosomal subunit protein uS7 (RPS5).